A 113-amino-acid polypeptide reads, in one-letter code: Hydrogenase maturation factor HybF (113 aa).

The Ni(2+) site is built by His2 and Glu3. Residues Cys73, Cys76, Cys89, and Cys92 each contribute to the Zn(2+) site.

Belongs to the HypA/HybF family. HybF subfamily.

In terms of biological role, involved in the maturation of [NiFe] hydrogenases. Required for nickel insertion into the metal center of the hydrogenase. The chain is Hydrogenase maturation factor HybF from Proteus vulgaris.